The following is a 171-amino-acid chain: Co-chaperone protein HscB (171 aa).

The region spanning 2-74 is the J domain; the sequence is DYFTLFGLPA…LTRAEYLLSL (73 aa).

This sequence belongs to the HscB family. As to quaternary structure, interacts with HscA and stimulates its ATPase activity. Interacts with IscU.

Its function is as follows. Co-chaperone involved in the maturation of iron-sulfur cluster-containing proteins. Seems to help targeting proteins to be folded toward HscA. The protein is Co-chaperone protein HscB of Salmonella heidelberg (strain SL476).